We begin with the raw amino-acid sequence, 168 residues long: Mitochondrial inner membrane protein SHH4 (168 aa).

Residues 1–23 constitute a mitochondrion transit peptide; the sequence is MSSTKFLKPLCRIRAFHTSIARS. The Mitochondrial matrix portion of the chain corresponds to 24–65; the sequence is FTIPFLPKIPQKPGGVSGTANDSSYMPPESRAQGSYHWIVER. The chain crosses the membrane as a helical span at residues 66–86; the sequence is GLSLAVLPLIAVPLVTTGPIS. Residues 87–92 lie on the Mitochondrial intermembrane side of the membrane; the sequence is TFTDTF. A helical membrane pass occupies residues 93-113; the sequence is LSLVLLGHCHIGFQSCIIDYI. Heme is bound at residue cysteine 101. Tyrosine 112 contributes to the a ubiquinone binding site. The Mitochondrial matrix portion of the chain corresponds to 114–120; the sequence is SERVYGK. The helical transmembrane segment at 121-141 threads the bilayer; the sequence is VHHYAMYLLSLGSFLSFVGIY. The Mitochondrial intermembrane segment spans residues 142-168; the sequence is KLESQEAGLIASLKSLWDNKPVEKKRQ.

Belongs to the CybS family. In terms of assembly, interacts with SDH3.

The protein localises to the mitochondrion inner membrane. Functionally, homolog of SDH4, but seems not to be a stoichiometric subunit of either the succinate dehydrogenase (SDH) complex or the mitochondrial inner membrane translocase TIM22 complex. In Saccharomyces cerevisiae (strain ATCC 204508 / S288c) (Baker's yeast), this protein is Mitochondrial inner membrane protein SHH4.